Consider the following 317-residue polypeptide: Cell division protein FtsX (317 aa).

Residues 1–39 are Cytoplasmic-facing; it reads MAIVRHKQPPLRRFMMYWVDHARQAFSSLGELWRNPLAS. Residues 40 to 60 traverse the membrane as a helical segment; it reads LMTLAVLGVSLALPSCFHVLL. At 61-188 the chain is on the periplasmic side; it reads KNAEVVEGSW…LQGIMNLLRH (128 aa). The helical transmembrane segment at 189-209 threads the bilayer; the sequence is TITGIAVLLLSAVLLIVGNTL. Residues 210–241 lie on the Cytoplasmic side of the membrane; the sequence is RLNILNQRSEIEVLKLVGATDAFIHRPFLYTG. A helical transmembrane segment spans residues 242 to 262; the sequence is IWFGVIGGMLAWWLTEVMVIW. At 263 to 280 the chain is on the periplasmic side; sequence SEGVVNELAGLYNSNFRL. The chain crosses the membrane as a helical span at residues 281 to 301; the sequence is VGMGAVDGINLILLGALLGLI. Residues 302–317 are Cytoplasmic-facing; that stretch reads ASWFSVHRHIRDIEPS.

Belongs to the ABC-4 integral membrane protein family. FtsX subfamily. As to quaternary structure, forms a membrane-associated complex with FtsE.

The protein resides in the cell inner membrane. In terms of biological role, part of the ABC transporter FtsEX involved in cellular division. Encoded in an operon consisting of genes ftsY, ftsE and ftsX. This chain is Cell division protein FtsX, found in Aeromonas hydrophila.